The sequence spans 352 residues: Type II restriction enzyme HaeII (352 aa).

It catalyses the reaction Endonucleolytic cleavage of DNA to give specific double-stranded fragments with terminal 5'-phosphates.. In terms of biological role, a P subtype restriction enzyme that recognizes the double-stranded sequence 5'-RGCGCY-3' and cleaves after C-5. The protein is Type II restriction enzyme HaeII (haeIIR) of Haemophilus aegyptius.